The following is a 649-amino-acid chain: Quinol oxidase subunit 1 (649 aa).

At M1–L15 the chain is on the extracellular side. The helical transmembrane segment at I16–L34 threads the bilayer. The Cytoplasmic segment spans residues T35 to L56. Residues G57–G75 traverse the membrane as a helical segment. At L76–E97 the chain is on the extracellular side. The chain crosses the membrane as a helical span at residues I98–G117. A Fe(II)-heme a-binding site is contributed by H102. The Cytoplasmic segment spans residues L118–N139. Residues L140–V157 traverse the membrane as a helical segment. At I158–L190 the chain is on the extracellular side. The chain crosses the membrane as a helical span at residues Q191–L209. At K210–T227 the chain is on the cytoplasmic side. A helical transmembrane segment spans residues T228 to L246. At A247 to A272 the chain is on the extracellular side. Residues N273–G292 traverse the membrane as a helical segment. H280 and Y284 together coordinate Cu cation. Residues H280–Y284 constitute a cross-link (1'-histidyl-3'-tyrosine (His-Tyr)). The Cytoplasmic portion of the chain corresponds to I293–S315. Residues I316 to G335 traverse the membrane as a helical segment. H329 and H330 together coordinate Cu cation. Over N336 to F343 the chain is Extracellular. A helical membrane pass occupies residues F344 to W362. The Cytoplasmic segment spans residues L363–M377. The helical transmembrane segment at L378–L397 threads the bilayer. At A398–Q405 the chain is on the extracellular side. The chain crosses the membrane as a helical span at residues Y406–V425. Heme a3 is bound at residue H415. Residue H417 participates in Fe(II)-heme a binding. Over F426–F452 the chain is Cytoplasmic. The helical transmembrane segment at F453–L472 threads the bilayer. Residues Q473–T490 lie on the Extracellular side of the membrane. Residues L491 to C510 traverse the membrane as a helical segment. Residues Y511–S584 lie on the Cytoplasmic side of the membrane. A helical transmembrane segment spans residues N585–V604. The Extracellular portion of the chain corresponds to F605–M610. A helical transmembrane segment spans residues G611–N631. The Cytoplasmic segment spans residues G632 to E649.

Belongs to the heme-copper respiratory oxidase family. Cu cation is required as a cofactor. It depends on ferriheme a as a cofactor. The cofactor is Heme A3..

It localises to the cell membrane. The catalysed reaction is 2 a quinol + O2 = 2 a quinone + 2 H2O. It participates in energy metabolism; oxidative phosphorylation. Catalyzes quinol oxidation with the concomitant reduction of oxygen to water. Major component for energy conversion during vegetative growth. This Bacillus subtilis (strain 168) protein is Quinol oxidase subunit 1 (qoxB).